The following is a 117-amino-acid chain: MTRVRRGYIARRRRTKIRLFAATFRGAHSRLTRAATQQKMRALVSAHRDRGKQKRDFRRLWITRINAVTRENGVCYSYSRLMHNLYKRQLLLNRXILAQLAILNKNCLHIISNEIIK.

It belongs to the bacterial ribosomal protein bL20 family.

The protein localises to the plastid. It localises to the chloroplast. Functionally, binds directly to 23S ribosomal RNA and is necessary for the in vitro assembly process of the 50S ribosomal subunit. It is not involved in the protein synthesizing functions of that subunit. The polypeptide is Large ribosomal subunit protein bL20c (Acorus gramineus (Dwarf sweet flag)).